We begin with the raw amino-acid sequence, 151 residues long: Large ribosomal subunit protein bL9 (151 aa).

Belongs to the bacterial ribosomal protein bL9 family.

In terms of biological role, binds to the 23S rRNA. The polypeptide is Large ribosomal subunit protein bL9 (Prochlorococcus marinus (strain MIT 9215)).